A 331-amino-acid polypeptide reads, in one-letter code: Beta-hexosaminidase (331 aa).

Residues Asp60, Arg68, Arg133, and 163-164 (KH) contribute to the substrate site. Catalysis depends on His176, which acts as the Proton donor/acceptor. The active-site Nucleophile is Asp247.

This sequence belongs to the glycosyl hydrolase 3 family. NagZ subfamily.

Its subcellular location is the cytoplasm. It catalyses the reaction Hydrolysis of terminal non-reducing N-acetyl-D-hexosamine residues in N-acetyl-beta-D-hexosaminides.. Its pathway is cell wall biogenesis; peptidoglycan recycling. Functionally, plays a role in peptidoglycan recycling by cleaving the terminal beta-1,4-linked N-acetylglucosamine (GlcNAc) from peptide-linked peptidoglycan fragments, giving rise to free GlcNAc, anhydro-N-acetylmuramic acid and anhydro-N-acetylmuramic acid-linked peptides. The sequence is that of Beta-hexosaminidase from Xanthomonas campestris pv. campestris (strain B100).